The following is a 149-amino-acid chain: Protein K7 (149 aa).

Belongs to the orthopoxvirus OPG044 family. Interacts with DDX3; this interaction inhibits DDX3 and suppresses DDX3-mediated IFN-beta promoter induction. Interacts with TRAF6 and IRAK2; these interactions suppress TLR-dependent NF-KappaB activation.

It is found in the host cytoplasm. In terms of biological role, virulence factor that affects the acute immune response to infection. Bcl-2-like protein which, through its interaction with the DEAD box RNA helicase DDX3X/DDX3, prevents TBK1/IKKepsilon-mediated IRF3 activation. Contributes to virulence by binding to the host TRAF6 and IRAK2 and preventing host NF-kappa-B activation. The protein is Protein K7 (OPG044) of Cynomys gunnisoni (Gunnison's prairie dog).